Reading from the N-terminus, the 143-residue chain is S-adenosylmethionine decarboxylase proenzyme (143 aa).

The active-site Schiff-base intermediate with substrate; via pyruvic acid is serine 66. At serine 66 the chain carries Pyruvic acid (Ser); by autocatalysis. Residue histidine 71 is the Proton acceptor; for processing activity of the active site. Cysteine 86 (proton donor; for catalytic activity) is an active-site residue.

The protein belongs to the prokaryotic AdoMetDC family. Type 1 subfamily. As to quaternary structure, heterotetramer of two alpha and two beta chains arranged as a dimer of alpha/beta heterodimers. Requires pyruvate as cofactor. Post-translationally, is synthesized initially as an inactive proenzyme. Formation of the active enzyme involves a self-maturation process in which the active site pyruvoyl group is generated from an internal serine residue via an autocatalytic post-translational modification. Two non-identical subunits are generated from the proenzyme in this reaction, and the pyruvate is formed at the N-terminus of the alpha chain, which is derived from the carboxyl end of the proenzyme. The post-translation cleavage follows an unusual pathway, termed non-hydrolytic serinolysis, in which the side chain hydroxyl group of the serine supplies its oxygen atom to form the C-terminus of the beta chain, while the remainder of the serine residue undergoes an oxidative deamination to produce ammonia and the pyruvoyl group blocking the N-terminus of the alpha chain.

It catalyses the reaction S-adenosyl-L-methionine + H(+) = S-adenosyl 3-(methylsulfanyl)propylamine + CO2. It functions in the pathway amine and polyamine biosynthesis; S-adenosylmethioninamine biosynthesis; S-adenosylmethioninamine from S-adenosyl-L-methionine: step 1/1. Its function is as follows. Catalyzes the decarboxylation of S-adenosylmethionine to S-adenosylmethioninamine (dcAdoMet), the propylamine donor required for the synthesis of the polyamines spermine and spermidine from the diamine putrescine. The polypeptide is S-adenosylmethionine decarboxylase proenzyme (Thermococcus gammatolerans (strain DSM 15229 / JCM 11827 / EJ3)).